We begin with the raw amino-acid sequence, 327 residues long: AA9 family lytic polysaccharide monooxygenase G (327 aa).

The first 20 residues, 1–20, serve as a signal peptide directing secretion; sequence MKLNLASLCFLASIAPLVSG. Positions 21 and 96 each coordinate Cu(2+). A disulfide bond links Cys-62 and Cys-185. An O2-binding site is contributed by His-172. Residue Tyr-182 participates in Cu(2+) binding. An N-linked (GlcNAc...) asparagine glycan is attached at Asn-290. Residues 291-327 form the CBM1 domain; it reads GTIKKYYQCGGQGWTGSGSCEAGTSCREWNTWYFQCV.

This sequence belongs to the polysaccharide monooxygenase AA9 family. Cu(2+) is required as a cofactor.

The protein resides in the secreted. The catalysed reaction is [(1-&gt;4)-beta-D-glucosyl]n+m + reduced acceptor + O2 = 4-dehydro-beta-D-glucosyl-[(1-&gt;4)-beta-D-glucosyl]n-1 + [(1-&gt;4)-beta-D-glucosyl]m + acceptor + H2O.. Functionally, lytic polysaccharide monooxygenase (LPMO) that depolymerizes crystalline and amorphous polysaccharides via the oxidation of scissile alpha- or beta-(1-4)-glycosidic bonds, yielding C1 or C4 oxidation products. Catalysis by LPMOs requires the reduction of the active-site copper from Cu(II) to Cu(I) by a reducing agent and H(2)O(2) or O(2) as a cosubstrate. The sequence is that of AA9 family lytic polysaccharide monooxygenase G from Aspergillus tamarii.